A 232-amino-acid chain; its full sequence is tRNA (guanine-N(7)-)-methyltransferase (232 aa).

4 residues coordinate S-adenosyl-L-methionine: E63, E88, D115, and D137. D137 is an active-site residue. Residues K141, D173, and 211-214 (TRYE) contribute to the substrate site.

This sequence belongs to the class I-like SAM-binding methyltransferase superfamily. TrmB family.

The enzyme catalyses guanosine(46) in tRNA + S-adenosyl-L-methionine = N(7)-methylguanosine(46) in tRNA + S-adenosyl-L-homocysteine. Its pathway is tRNA modification; N(7)-methylguanine-tRNA biosynthesis. Catalyzes the formation of N(7)-methylguanine at position 46 (m7G46) in tRNA. The polypeptide is tRNA (guanine-N(7)-)-methyltransferase (Rhizobium meliloti (strain 1021) (Ensifer meliloti)).